The following is a 236-amino-acid chain: Purine nucleoside phosphorylase DeoD-type 2 (236 aa).

An a purine D-ribonucleoside-binding site is contributed by H5. Residues G21, R25, R44, and 88–91 (RIGS) contribute to the phosphate site. A purine D-ribonucleoside is bound by residues 180 to 182 (DME) and 204 to 205 (SD). Catalysis depends on D205, which acts as the Proton donor.

Belongs to the PNP/UDP phosphorylase family. As to quaternary structure, homohexamer; trimer of homodimers.

The enzyme catalyses a purine D-ribonucleoside + phosphate = a purine nucleobase + alpha-D-ribose 1-phosphate. It catalyses the reaction a purine 2'-deoxy-D-ribonucleoside + phosphate = a purine nucleobase + 2-deoxy-alpha-D-ribose 1-phosphate. In terms of biological role, catalyzes the reversible phosphorolytic breakdown of the N-glycosidic bond in the beta-(deoxy)ribonucleoside molecules, with the formation of the corresponding free purine bases and pentose-1-phosphate. The chain is Purine nucleoside phosphorylase DeoD-type 2 from Vibrio cholerae serotype O1 (strain ATCC 39315 / El Tor Inaba N16961).